The primary structure comprises 32 residues: Photosystem I reaction center subunit XII (32 aa).

A helical transmembrane segment spans residues 10–27; it reads VVALISALVTGILALRLG.

It belongs to the PsaM family.

The protein resides in the plastid. The protein localises to the chloroplast thylakoid membrane. The protein is Photosystem I reaction center subunit XII of Zygnema circumcarinatum (Green alga).